A 414-amino-acid chain; its full sequence is 2,3-diketo-5-methylthiopentyl-1-phosphate enolase (414 aa).

Lysine 99 functions as the Proton acceptor in the catalytic mechanism. Substrate is bound by residues lysine 148, 174 to 177 (KDDE), histidine 265, glycine 338, and 360 to 361 (GG). Positions 174, 176, and 177 each coordinate Mg(2+). At lysine 174 the chain carries N6-carboxylysine.

Belongs to the RuBisCO large chain family. Type IV subfamily. In terms of assembly, homodimer. Mg(2+) serves as cofactor.

The catalysed reaction is 5-methylsulfanyl-2,3-dioxopentyl phosphate = 2-hydroxy-5-methylsulfanyl-3-oxopent-1-enyl phosphate. It functions in the pathway amino-acid biosynthesis; L-methionine biosynthesis via salvage pathway; L-methionine from S-methyl-5-thio-alpha-D-ribose 1-phosphate: step 3/6. Catalyzes the enolization of 2,3-diketo-5-methylthiopentyl-1-phosphate (DK-MTP-1-P) into 2-hydroxy-3-keto-5-methylthiopentenyl-1-phosphate (HK-MTPenyl-1-P). The chain is 2,3-diketo-5-methylthiopentyl-1-phosphate enolase from Bacillus cereus (strain ATCC 10987 / NRS 248).